Here is a 585-residue protein sequence, read N- to C-terminus: Arginine--tRNA ligase (585 aa).

A 'HIGH' region motif is present at residues 127-137; that stretch reads PNTNKPLHVGH.

This sequence belongs to the class-I aminoacyl-tRNA synthetase family. As to quaternary structure, monomer.

It is found in the cytoplasm. The enzyme catalyses tRNA(Arg) + L-arginine + ATP = L-arginyl-tRNA(Arg) + AMP + diphosphate. The polypeptide is Arginine--tRNA ligase (Borrelia duttonii (strain Ly)).